The chain runs to 311 residues: Transcription factor MafB (311 aa).

Disordered regions lie at residues 35–78 (PLGR…PTEQ) and 150–199 (EDLA…EDRF). The span at 54–76 (SVSSTPISTPCSSVPSSPSFSPT) shows a compositional bias: low complexity. Positions 157-167 (HPHHHHHHHHQ) are enriched in basic residues. The segment covering 168–194 (ASPTPSTSSSSSQQLQTSHQQHPPSSS) has biased composition (low complexity). The basic motif stretch occupies residues 226–251 (RLKQKRRTLKNRGYAQSCRYKRVQQK). In terms of domain architecture, bZIP spans 226–289 (RLKQKRRTLK…DAYKLKCEKL (64 aa)). The interval 254-275 (LENEKTQLIQQVEQLKQEVTRL) is leucine-zipper.

Belongs to the bZIP family. Maf subfamily. Homodimer or heterodimer with other bHLH-Zip transcription factors. Binds DNA as a homodimer or heterodimer. Self-associates; the interaction requires the intact MAFB leucine-zipper domain. Interacts with FOS, HOXD12 and PRRX1. In terms of tissue distribution, expressed in brain, thymus, gut, lung, mesenterium, spleen, kidney, ovary and bursa.

Its subcellular location is the nucleus. Functionally, acts as a transcriptional activator or repressor. Positively regulates the expression of alpha-A crystallin genes during lens fiber cell differentiation. Binds to Maf recognition elements (MARE). This chain is Transcription factor MafB (MAFB), found in Gallus gallus (Chicken).